The primary structure comprises 280 residues: Trypsin zeta (280 aa).

An N-terminal signal peptide occupies residues 1–22 (MSSSWIVGLLAFLVSLVALTQG). Positions 23-38 (LPLLEDLDEKSVPDGR) are cleaved as a propeptide — activation peptide. The Peptidase S1 domain occupies 39–278 (IVGGYATDIA…LRPWIDAVLA (240 aa)). The cysteines at positions 72 and 88 are disulfide-linked. Catalysis depends on charge relay system residues His-87 and Asp-134. 2 disulfide bridges follow: Cys-198-Cys-218 and Cys-230-Cys-254. Ser-234 acts as the Charge relay system in catalysis.

Belongs to the peptidase S1 family.

The protein localises to the secreted. Its subcellular location is the extracellular space. The enzyme catalyses Preferential cleavage: Arg-|-Xaa, Lys-|-Xaa.. The chain is Trypsin zeta (zetaTry) from Drosophila melanogaster (Fruit fly).